The chain runs to 295 residues: 4-hydroxy-tetrahydrodipicolinate synthase (295 aa).

Thr-46 contributes to the pyruvate binding site. Residue Tyr-135 is the Proton donor/acceptor of the active site. The Schiff-base intermediate with substrate role is filled by Lys-164. A pyruvate-binding site is contributed by Ile-205.

This sequence belongs to the DapA family. In terms of assembly, homotetramer; dimer of dimers.

The protein localises to the cytoplasm. It catalyses the reaction L-aspartate 4-semialdehyde + pyruvate = (2S,4S)-4-hydroxy-2,3,4,5-tetrahydrodipicolinate + H2O + H(+). Its pathway is amino-acid biosynthesis; L-lysine biosynthesis via DAP pathway; (S)-tetrahydrodipicolinate from L-aspartate: step 3/4. Catalyzes the condensation of (S)-aspartate-beta-semialdehyde [(S)-ASA] and pyruvate to 4-hydroxy-tetrahydrodipicolinate (HTPA). The protein is 4-hydroxy-tetrahydrodipicolinate synthase of Wolinella succinogenes (strain ATCC 29543 / DSM 1740 / CCUG 13145 / JCM 31913 / LMG 7466 / NCTC 11488 / FDC 602W) (Vibrio succinogenes).